The primary structure comprises 135 residues: Small ribosomal subunit protein bS16m/bS16c (135 aa).

Residues 1–7 (MVVRIRL) constitute a chloroplast and mitochondrion transit peptide. A disordered region spans residues 87-135 (PMVAMGRKGGARDTRPVDPMTGRYVDAENKTVNANDNQPKEEDTEAKSA). Residues 124–135 (QPKEEDTEAKSA) show a composition bias toward basic and acidic residues.

This sequence belongs to the bacterial ribosomal protein bS16 family. In terms of assembly, component of the mitochondrial ribosome small subunit. Expressed at low levels in flowers, and, to a lower extent, in leaves, stems and roots.

It localises to the mitochondrion. It is found in the plastid. The protein localises to the chloroplast. The protein is Small ribosomal subunit protein bS16m/bS16c of Arabidopsis thaliana (Mouse-ear cress).